A 268-amino-acid polypeptide reads, in one-letter code: Myeloid leukemia factor 1 (268 aa).

Residues Ser8, Ser32, and Ser34 each carry the phosphoserine modification. Disordered stretches follow at residues 44–66 and 209–268; these read ISDG…SLTH and GRHN…SNKK. The segment at 50 to 125 is interaction with COPS3; sequence RAHNRRGHND…IGDEPPKVFQ (76 aa). Basic and acidic residues-rich tracts occupy residues 56 to 65 and 226 to 237; these read GHNDGEDSLT and PGSRELKRREKP.

This sequence belongs to the MLF family. Interacts with CENPU. Also interacts with NRBP1/MADM, YWHAZ/14-3-3-zeta and HNRPUL2/MANP. NRBP1 recruits a serine kinase which phosphorylates both itself and MLF1. Phosphorylated MLF1 then binds to YWHAZ and is retained in the cytoplasm. Retained in the nucleus by binding to HNRPUL2. Binds to COPS3/CSN3 which is required for suppression of COP1 and activation of p53. Phosphorylation is required for binding to YWHAZ. As to expression, most abundant in testis, ovary, skeletal muscle, heart, kidney and colon. Low expression in spleen, thymus and peripheral blood leukocytes.

It is found in the cytoplasm. It localises to the nucleus. The protein resides in the cell projection. The protein localises to the cilium. Its subcellular location is the cytoskeleton. It is found in the cilium basal body. Involved in lineage commitment of primary hemopoietic progenitors by restricting erythroid formation and enhancing myeloid formation. Interferes with erythropoietin-induced erythroid terminal differentiation by preventing cells from exiting the cell cycle through suppression of CDKN1B/p27Kip1 levels. Suppresses COP1 activity via CSN3 which activates p53 and induces cell cycle arrest. Binds DNA and affects the expression of a number of genes so may function as a transcription factor in the nucleus. The chain is Myeloid leukemia factor 1 (MLF1) from Homo sapiens (Human).